We begin with the raw amino-acid sequence, 162 residues long: Precursor protein UG (162 aa).

The signal sequence occupies residues 1-19 (MERILLCFIVATLVAISMA). A propeptide spanning residues 20 to 23 (NPRP) is cleaved from the precursor. 2 disulfide bridges follow: Cys30–Cys42 and Cys33–Cys49. Positions 56 to 59 (VPKP) are excised as a propeptide. Cystine bridges form between Cys66-Cys78 and Cys69-Cys85. Residues 92 to 95 (VPKP) constitute a propeptide that is removed on maturation. Intrachain disulfides connect Cys102–Cys114 and Cys105–Cys121. Residues 128–131 (VPKP) constitute a propeptide that is removed on maturation. 2 cysteine pairs are disulfide-bonded: Cys138–Cys150 and Cys141–Cys157.

This sequence belongs to the sea anemone BBH family.

It localises to the secreted. Its subcellular location is the nematocyst. Affects the ASIC3 channel (ACCN3) and produces analgesic effects. It produces a reversible inhibition effect on both the transient and the sustained current of human ASIC3 channels expressed in X.laevis oocytes. It completely blocks the transient component (IC(50)=10 uM) and partially (48%) inhibits the amplitude of the sustained component (IC(50)=1.44 uM). Using in vivo tests in mice, it reverses inflammatory and acid-induced pain. In terms of biological role, does not affect the ASIC3 channel. Does not cause lethality or paralysis of noble crayfish (A.astacus) at a dose of 1 mg/kg. This Urticina grebelnyi (Painted anemone) protein is Precursor protein UG.